The sequence spans 349 residues: 4-hydroxythreonine-4-phosphate dehydrogenase (349 aa).

Substrate is bound at residue threonine 135. A divalent metal cation-binding residues include histidine 170, histidine 215, and histidine 276. Residues lysine 284, asparagine 293, and arginine 302 each contribute to the substrate site.

This sequence belongs to the PdxA family. As to quaternary structure, homodimer. A divalent metal cation serves as cofactor.

It is found in the cytoplasm. It catalyses the reaction 4-(phosphooxy)-L-threonine + NAD(+) = 3-amino-2-oxopropyl phosphate + CO2 + NADH. The protein operates within cofactor biosynthesis; pyridoxine 5'-phosphate biosynthesis; pyridoxine 5'-phosphate from D-erythrose 4-phosphate: step 4/5. Its function is as follows. Catalyzes the NAD(P)-dependent oxidation of 4-(phosphooxy)-L-threonine (HTP) into 2-amino-3-oxo-4-(phosphooxy)butyric acid which spontaneously decarboxylates to form 3-amino-2-oxopropyl phosphate (AHAP). The chain is 4-hydroxythreonine-4-phosphate dehydrogenase from Synechococcus sp. (strain JA-3-3Ab) (Cyanobacteria bacterium Yellowstone A-Prime).